A 378-amino-acid chain; its full sequence is Erythronate-4-phosphate dehydrogenase (378 aa).

Substrate contacts are provided by serine 45 and threonine 66. Residues aspartate 146 and threonine 175 each contribute to the NAD(+) site. Arginine 208 is a catalytic residue. NAD(+) is bound at residue aspartate 232. Glutamate 237 is a catalytic residue. The active-site Proton donor is histidine 254. Glycine 257 contacts NAD(+). A substrate-binding site is contributed by tyrosine 258.

This sequence belongs to the D-isomer specific 2-hydroxyacid dehydrogenase family. PdxB subfamily. As to quaternary structure, homodimer.

The protein localises to the cytoplasm. It carries out the reaction 4-phospho-D-erythronate + NAD(+) = (R)-3-hydroxy-2-oxo-4-phosphooxybutanoate + NADH + H(+). Its pathway is cofactor biosynthesis; pyridoxine 5'-phosphate biosynthesis; pyridoxine 5'-phosphate from D-erythrose 4-phosphate: step 2/5. Catalyzes the oxidation of erythronate-4-phosphate to 3-hydroxy-2-oxo-4-phosphonooxybutanoate. The sequence is that of Erythronate-4-phosphate dehydrogenase from Escherichia fergusonii (strain ATCC 35469 / DSM 13698 / CCUG 18766 / IAM 14443 / JCM 21226 / LMG 7866 / NBRC 102419 / NCTC 12128 / CDC 0568-73).